Consider the following 64-residue polypeptide: Potassium channel toxin alpha-KTx J123 (64 aa).

The N-terminal stretch at 1–21 is a signal peptide; it reads MNKVYLVAVLVLFLALTINES. 3 disulfides stabilise this stretch: Cys30–Cys52, Cys37–Cys60, and Cys41–Cys62.

This sequence belongs to the short scorpion toxin superfamily. Potassium channel inhibitor family. Alpha-KTx 11 subfamily. As to expression, expressed by the venom gland.

Its subcellular location is the secreted. Its function is as follows. This recombinant toxin inhibits mammalian voltage-gated potassium channels Kv1.3/KCNA3 (IC(50)=0.79 nM) and Kv1.2/KCNA2 (IC(50)=26.4 nM). In Olivierus martensii (Manchurian scorpion), this protein is Potassium channel toxin alpha-KTx J123.